We begin with the raw amino-acid sequence, 424 residues long: Serine hydroxymethyltransferase (424 aa).

(6S)-5,6,7,8-tetrahydrofolate contacts are provided by residues L126 and 130–132 (GHL). The residue at position 235 (K235) is an N6-(pyridoxal phosphate)lysine. 359-361 (SPF) provides a ligand contact to (6S)-5,6,7,8-tetrahydrofolate.

The protein belongs to the SHMT family. Homodimer. Pyridoxal 5'-phosphate is required as a cofactor.

The protein resides in the cytoplasm. The enzyme catalyses (6R)-5,10-methylene-5,6,7,8-tetrahydrofolate + glycine + H2O = (6S)-5,6,7,8-tetrahydrofolate + L-serine. The protein operates within one-carbon metabolism; tetrahydrofolate interconversion. It participates in amino-acid biosynthesis; glycine biosynthesis; glycine from L-serine: step 1/1. Functionally, catalyzes the reversible interconversion of serine and glycine with tetrahydrofolate (THF) serving as the one-carbon carrier. This reaction serves as the major source of one-carbon groups required for the biosynthesis of purines, thymidylate, methionine, and other important biomolecules. Also exhibits THF-independent aldolase activity toward beta-hydroxyamino acids, producing glycine and aldehydes, via a retro-aldol mechanism. This is Serine hydroxymethyltransferase from Prochlorococcus marinus (strain MIT 9303).